We begin with the raw amino-acid sequence, 196 residues long: Glycerol-3-phosphate acyltransferase 2 (196 aa).

5 consecutive transmembrane segments (helical) span residues 2–22 (GWWL…SYLI), 52–72 (VGGI…FITI), 80–100 (IVSL…FMKF), 112–132 (IIFC…LVIV), and 137–156 (YASL…GYLL).

This sequence belongs to the PlsY family. As to quaternary structure, probably interacts with PlsX.

The protein localises to the cell inner membrane. It catalyses the reaction an acyl phosphate + sn-glycerol 3-phosphate = a 1-acyl-sn-glycero-3-phosphate + phosphate. Its pathway is lipid metabolism; phospholipid metabolism. Functionally, catalyzes the transfer of an acyl group from acyl-phosphate (acyl-PO(4)) to glycerol-3-phosphate (G3P) to form lysophosphatidic acid (LPA). This enzyme utilizes acyl-phosphate as fatty acyl donor, but not acyl-CoA or acyl-ACP. The polypeptide is Glycerol-3-phosphate acyltransferase 2 (Thermotoga maritima (strain ATCC 43589 / DSM 3109 / JCM 10099 / NBRC 100826 / MSB8)).